The sequence spans 118 residues: Small ribosomal subunit protein uS13 (118 aa).

A disordered region spans residues 93–118 (RGLPVRGQRTKTNARTRKGPRKPIRK).

It belongs to the universal ribosomal protein uS13 family. Part of the 30S ribosomal subunit. Forms a loose heterodimer with protein S19. Forms two bridges to the 50S subunit in the 70S ribosome.

Located at the top of the head of the 30S subunit, it contacts several helices of the 16S rRNA. In the 70S ribosome it contacts the 23S rRNA (bridge B1a) and protein L5 of the 50S subunit (bridge B1b), connecting the 2 subunits; these bridges are implicated in subunit movement. Contacts the tRNAs in the A and P-sites. The polypeptide is Small ribosomal subunit protein uS13 (Pseudomonas fluorescens (strain Pf0-1)).